The primary structure comprises 250 residues: Purine nucleoside phosphorylase BQ2027_MB2173C (250 aa).

Positions 77, 114, and 131 each coordinate Zn(2+).

This sequence belongs to the purine nucleoside phosphorylase YfiH/LACC1 family. In terms of assembly, homodimer. Cu(2+) serves as cofactor. The cofactor is Zn(2+).

It catalyses the reaction adenosine + phosphate = alpha-D-ribose 1-phosphate + adenine. The enzyme catalyses S-methyl-5'-thioadenosine + phosphate = 5-(methylsulfanyl)-alpha-D-ribose 1-phosphate + adenine. The catalysed reaction is inosine + phosphate = alpha-D-ribose 1-phosphate + hypoxanthine. It carries out the reaction adenosine + H2O + H(+) = inosine + NH4(+). Functionally, purine nucleoside enzyme that catalyzes the phosphorolysis of adenosine and inosine nucleosides, yielding D-ribose 1-phosphate and the respective free bases, adenine and hypoxanthine. Also catalyzes the phosphorolysis of S-methyl-5'-thioadenosine into adenine and S-methyl-5-thio-alpha-D-ribose 1-phosphate. Also has adenosine deaminase activity. In Mycobacterium bovis (strain ATCC BAA-935 / AF2122/97), this protein is Purine nucleoside phosphorylase BQ2027_MB2173C.